Here is a 422-residue protein sequence, read N- to C-terminus: UDP-N-acetylglucosamine 1-carboxyvinyltransferase (422 aa).

A phosphoenolpyruvate-binding site is contributed by 22–23; that stretch reads KN. UDP-N-acetyl-alpha-D-glucosamine is bound at residue arginine 95. Cysteine 119 serves as the catalytic Proton donor. The residue at position 119 (cysteine 119) is a 2-(S-cysteinyl)pyruvic acid O-phosphothioketal. UDP-N-acetyl-alpha-D-glucosamine is bound by residues 124–128, aspartate 309, and valine 331; that span reads RPIDQ.

It belongs to the EPSP synthase family. MurA subfamily.

It is found in the cytoplasm. It carries out the reaction phosphoenolpyruvate + UDP-N-acetyl-alpha-D-glucosamine = UDP-N-acetyl-3-O-(1-carboxyvinyl)-alpha-D-glucosamine + phosphate. The protein operates within cell wall biogenesis; peptidoglycan biosynthesis. Cell wall formation. Adds enolpyruvyl to UDP-N-acetylglucosamine. The chain is UDP-N-acetylglucosamine 1-carboxyvinyltransferase from Anaeromyxobacter sp. (strain K).